We begin with the raw amino-acid sequence, 213 residues long: 3-isopropylmalate dehydratase small subunit (213 aa).

This sequence belongs to the LeuD family. LeuD type 1 subfamily. In terms of assembly, heterodimer of LeuC and LeuD.

The catalysed reaction is (2R,3S)-3-isopropylmalate = (2S)-2-isopropylmalate. Its pathway is amino-acid biosynthesis; L-leucine biosynthesis; L-leucine from 3-methyl-2-oxobutanoate: step 2/4. Its function is as follows. Catalyzes the isomerization between 2-isopropylmalate and 3-isopropylmalate, via the formation of 2-isopropylmaleate. The protein is 3-isopropylmalate dehydratase small subunit of Neisseria gonorrhoeae (strain ATCC 700825 / FA 1090).